We begin with the raw amino-acid sequence, 273 residues long: MENRTNFFHLHLISDSTGETLISAGRAASAQFRSAQPIEHVYPLIRNRKQLLPVLQAIDDAPGIVLYTIVDRELASLIDERCIEMGVASVNVLEPVMNAFQIYLGAPSRRRVGAQHVMNAGYFARIEALNFTMDHDDGQMPDDYNDADVVIIGISRTSKTPTSIYLANRGIKTANIPIVYGVPLPESLFVASKPLIVCLIATTDRISQVRENRVLGVTQGFDREHYTDRAAISEELKYARSLCARHNWPLIDVTRRSIEETAAAIVALRPKLR.

153–160 (GISRTSKT) is an ADP binding site.

Belongs to the pyruvate, phosphate/water dikinase regulatory protein family. PDRP subfamily.

It catalyses the reaction N(tele)-phospho-L-histidyl/L-threonyl-[pyruvate, phosphate dikinase] + ADP = N(tele)-phospho-L-histidyl/O-phospho-L-threonyl-[pyruvate, phosphate dikinase] + AMP + H(+). It carries out the reaction N(tele)-phospho-L-histidyl/O-phospho-L-threonyl-[pyruvate, phosphate dikinase] + phosphate + H(+) = N(tele)-phospho-L-histidyl/L-threonyl-[pyruvate, phosphate dikinase] + diphosphate. Functionally, bifunctional serine/threonine kinase and phosphorylase involved in the regulation of the pyruvate, phosphate dikinase (PPDK) by catalyzing its phosphorylation/dephosphorylation. This chain is Putative pyruvate, phosphate dikinase regulatory protein, found in Rhizobium johnstonii (strain DSM 114642 / LMG 32736 / 3841) (Rhizobium leguminosarum bv. viciae).